Reading from the N-terminus, the 266-residue chain is DLA class II histocompatibility antigen, DR-1 beta chain (266 aa).

Residues 1-29 (MVCLCFLGGSWMTALMLILMVLNPPFAWA) form the signal peptide. Residues 30-124 (RDTPPHFLEV…IESFTVQRRV (95 aa)) form a beta-1 region. The Extracellular portion of the chain corresponds to 30-227 (RDTPPHFLEV…RAQSDSAQSK (198 aa)). Disulfide bonds link C44-C108 and C146-C202. N-linked (GlcNAc...) asparagine glycosylation occurs at N48. The segment at 125 to 227 (EPTVTVYPTK…RAQSDSAQSK (103 aa)) is beta-2. In terms of domain architecture, Ig-like C1-type spans 126 to 214 (PTVTVYPTKT…EHPSLTSPVT (89 aa)). Residues 228-250 (MLSGIGGFVLGLLFLAVGLFIYF) traverse the membrane as a helical segment. Residues 251-266 (RNQKGHSGLQPTGLLS) are Cytoplasmic-facing.

It belongs to the MHC class II family.

The protein resides in the membrane. This is DLA class II histocompatibility antigen, DR-1 beta chain from Canis lupus familiaris (Dog).